The sequence spans 548 residues: Putative ATP-dependent RNA helicase R290 (548 aa).

One can recognise a Helicase ATP-binding domain in the interval 38 to 206 (INKVINGEDV…CKVLQLKTNE (169 aa)). 51-58 (LMTSAGKS) contacts ATP. A DEAH box motif is present at residues 150 to 153 (DEAH). Residues 231-376 (DIVPIINKYP…KTQLALLEQM (146 aa)) form the Helicase C-terminal domain.

The protein belongs to the DEAD box helicase family. DEAH subfamily.

The catalysed reaction is ATP + H2O = ADP + phosphate + H(+). The polypeptide is Putative ATP-dependent RNA helicase R290 (Acanthamoeba polyphaga mimivirus (APMV)).